A 342-amino-acid chain; its full sequence is Trace amine-associated receptor 8 (342 aa).

The Extracellular segment spans residues 1–31 (MTSNFSQPVVQLCYEDVNGSCIETPYSPGSR). Residues asparagine 4 and asparagine 18 are each glycosylated (N-linked (GlcNAc...) asparagine). 2 disulfide bridges follow: cysteine 21-cysteine 185 and cysteine 104-cysteine 189. A helical membrane pass occupies residues 32–52 (VILYTAFSFGSLLAVFGNLLV). The Cytoplasmic segment spans residues 53 to 67 (MTSVLHFKQLHSPTN). Residues 68–88 (FLIASLACADFLVGVTVMLFS) traverse the membrane as a helical segment. Topologically, residues 89 to 111 (MVRTVESCWYFGAKFCTLHSCCD) are extracellular. A helical transmembrane segment spans residues 112 to 132 (VAFCYSSVLHLCFICIDRYIV). Over 133–146 (VTDPLVYATKFTVS) the chain is Cytoplasmic. A helical transmembrane segment spans residues 147 to 167 (VSGICISVSWILPLTYSGAVF). Residues 168–195 (YTGVNDDGLEELVSALNCVGGCQIIVSQ) are Extracellular-facing. A helical membrane pass occupies residues 196-216 (GWVLIDFLLFFIPTLVMIILY). The Cytoplasmic segment spans residues 217–258 (SKIFLIAKQQAIKIETTSSKVESSSESYKIRVAKRERKAAKT). The helical transmembrane segment at 259-279 (LGVTVLAFVISWLPYTVDILI) threads the bilayer. Position 280 (aspartate 280) is a topological domain, extracellular. The chain crosses the membrane as a helical span at residues 281 to 301 (AFMGFLTPAYIYEICCWSAYY). Over 302 to 342 (NSAMNPLIYALFYPWFRKAIKLILSGDVLKASSSTISLFLE) the chain is Cytoplasmic.

Belongs to the G-protein coupled receptor 1 family. Expressed in kidney and amygdala. Not expressed in other tissues or brain regions tested.

It is found in the cell membrane. Functionally, olfactory receptor specific for trace amines. Trace amine compounds are enriched in animal body fluids and act on trace amine-associated receptors (TAARs) to elicit both intraspecific and interspecific innate behaviors. Ligand-binding causes a conformation change that triggers signaling via G alpha proteins, possibly G(i)/G(o) G alpha proteins. This chain is Trace amine-associated receptor 8 (TAAR8), found in Homo sapiens (Human).